Reading from the N-terminus, the 317-residue chain is tRNA dimethylallyltransferase (317 aa).

ATP is bound at residue Gly14–Thr21. Position 16–21 (Thr16–Thr21) interacts with substrate. Residues Asp39–Gln42 form an interaction with substrate tRNA region.

It belongs to the IPP transferase family. As to quaternary structure, monomer. The cofactor is Mg(2+).

The enzyme catalyses adenosine(37) in tRNA + dimethylallyl diphosphate = N(6)-dimethylallyladenosine(37) in tRNA + diphosphate. Catalyzes the transfer of a dimethylallyl group onto the adenine at position 37 in tRNAs that read codons beginning with uridine, leading to the formation of N6-(dimethylallyl)adenosine (i(6)A). The sequence is that of tRNA dimethylallyltransferase from Bacillus thuringiensis subsp. konkukian (strain 97-27).